A 602-amino-acid chain; its full sequence is MATPCIQNAFRRKTLPVRIGDLFVGSEHSIKIQSMTTTATTDVDGTVRQICALQELGCDIVRVTVQGLREVHACEHIKDRLIQQNISIPLVADIHFFPQAAIHVVDCVDKVRINPGNYVDKRNMFTGKIYSDEQYAHSLEHLMNKFSPLVEKCKRLGKAMRIGVNHGSLSERVTQRYGNTIEGMVYSALEYAEVCVAMDYHDVIFSMKSSNPKVMVAAYRSLAYELDQREWSYPLHLGVTEAGSGTAGIVKSAVGIGTLLSEGLGDTIRCSLTGSPINEIPICIDLLKQTTELSERWGEADNPFAIHSSKQLGTRNTLNTPPWDNVYGLLINLTDVQLLTAEPIELLQCLGIDTTTGKIDPTTPEGVVVPKAMRSSPIVSEIEKHLLVFNKEDAPILNPMNEEEWLSEETLSAPFVYFEVTDIHTARRFFSLRQHSTQPVCLSFSLDPHLSKNEAIIDLSARLGALLLDGLGSCVLLDFVDIKLSRTLGFLILQSANIRSVTVEYVSCPGCGRTLFDLLAVSQRIRERTKHLPGGLKIAVMGCIVNGPGEMADADFGYVGSKPGMIDLYVKHKCVKSCIPIENAEEELVQLLKEHGVWKEPE.

Residues C508, C511, C543, and E550 each contribute to the [4Fe-4S] cluster site.

This sequence belongs to the IspG family. It depends on [4Fe-4S] cluster as a cofactor.

It catalyses the reaction (2E)-4-hydroxy-3-methylbut-2-enyl diphosphate + oxidized [flavodoxin] + H2O + 2 H(+) = 2-C-methyl-D-erythritol 2,4-cyclic diphosphate + reduced [flavodoxin]. It participates in isoprenoid biosynthesis; isopentenyl diphosphate biosynthesis via DXP pathway; isopentenyl diphosphate from 1-deoxy-D-xylulose 5-phosphate: step 5/6. Converts 2C-methyl-D-erythritol 2,4-cyclodiphosphate (ME-2,4cPP) into 1-hydroxy-2-methyl-2-(E)-butenyl 4-diphosphate. In Chlamydia trachomatis serovar L2 (strain ATCC VR-902B / DSM 19102 / 434/Bu), this protein is 4-hydroxy-3-methylbut-2-en-1-yl diphosphate synthase (flavodoxin).